The sequence spans 107 residues: Heme-degrading monooxygenase (107 aa).

In terms of domain architecture, ABM spans I2–Y94. N6 provides a ligand contact to Fe cation. H76 serves as a coordination point for heme.

It belongs to the antibiotic biosynthesis monooxygenase family. Heme-degrading monooxygenase IsdG subfamily. As to quaternary structure, homodimer.

Its subcellular location is the cytoplasm. The catalysed reaction is heme b + 3 reduced [NADPH--hemoprotein reductase] + 3 O2 = biliverdin IXalpha + CO + Fe(2+) + 3 oxidized [NADPH--hemoprotein reductase] + 3 H2O + H(+). Its function is as follows. Allows bacterial pathogens to use the host heme as an iron source. Catalyzes the oxidative degradation of the heme macrocyclic porphyrin ring to the biliverdin in the presence of a suitable electron donor such as ascorbate or NADPH--cytochrome P450 reductase, with subsequent release of free iron. This chain is Heme-degrading monooxygenase, found in Bacillus cereus (strain AH187).